The primary structure comprises 224 residues: (S)-2-haloacid dehalogenase H-109 (224 aa).

The Nucleophile role is filled by Asp10. Residues 11 to 12 (LY), Arg41, and 118 to 119 (SN) contribute to the an (S)-2-haloacid site. An important for catalytic activity region spans residues 175-180 (SSNSWD).

The protein belongs to the HAD-like hydrolase superfamily. S-2-haloalkanoic acid dehalogenase family.

It catalyses the reaction an (S)-2-haloacid + H2O = a (2R)-2-hydroxycarboxylate + a halide anion + H(+). The catalysed reaction is (S)-2-chloropropanoate + H2O = (R)-lactate + chloride + H(+). Catalyzes the hydrolytic dehalogenation of small (S)-2-haloalkanoic acids to yield the corresponding (R)-2-hydroxyalkanoic acids. Acts on acids of short chain lengths, C(2) to C(4), with inversion of configuration at C-2. Active with 2-halogenated carboxylic acids and converts only the S-isomer (or L-isomer) of 2-chloropropionic acid with inversion of configuration to produce R-lactate (or D-isomer). This is (S)-2-haloacid dehalogenase H-109 from Pseudomonas putida (Arthrobacter siderocapsulatus).